The following is a 426-amino-acid chain: MFEKQVFLFGVNHKTTPVAVREKIAFTDGYETALTRLQEEVGCDESYLLSTCNRVEILVYADSTRDIEAEVSRFLFAGKVPEEDCRDYLYALKGLPAVQHLFTVAASLDSMVVGEAQILGQLKTAYRHASALGCTGPLLNRLLHKSFSVAKRVRTETAIGASAVSISYAAVQLARKIFGNLDTKKVMLVGAGEMAELAAEHLVGQGVSSVVVANRTLTRAVELADKFGGTAICMEELYAQLEDVDIIISSTGAQHIIIESAEVRPIMRVRRNRPLFFIDIAVPRDLDPELNELENVYLYDIDDLSNVVEVNKSGRDHEAIKAGCIVEEETRKFDEWYQGLAVKPTVLALREKMSGIIEQELRKTLPRLHDLGEHDQRSIEKMVASISSKFLHDPLHYLKSDSCHGRDKSQAKVDTLRSVFSLKGDI.

Residues 51–54 (TCNR), serine 110, 115–117 (EAQ), and glutamine 121 contribute to the substrate site. Residue cysteine 52 is the Nucleophile of the active site. 190-195 (GAGEMA) provides a ligand contact to NADP(+).

This sequence belongs to the glutamyl-tRNA reductase family. Homodimer.

It carries out the reaction (S)-4-amino-5-oxopentanoate + tRNA(Glu) + NADP(+) = L-glutamyl-tRNA(Glu) + NADPH + H(+). It participates in porphyrin-containing compound metabolism; protoporphyrin-IX biosynthesis; 5-aminolevulinate from L-glutamyl-tRNA(Glu): step 1/2. Functionally, catalyzes the NADPH-dependent reduction of glutamyl-tRNA(Glu) to glutamate 1-semialdehyde (GSA). The chain is Glutamyl-tRNA reductase from Desulfotalea psychrophila (strain LSv54 / DSM 12343).